Here is a 246-residue protein sequence, read N- to C-terminus: Probable 2-phosphosulfolactate phosphatase (246 aa).

Belongs to the ComB family. Mg(2+) serves as cofactor.

The enzyme catalyses (2R)-O-phospho-3-sulfolactate + H2O = (2R)-3-sulfolactate + phosphate. The sequence is that of Probable 2-phosphosulfolactate phosphatase from Synechococcus sp. (strain WH7803).